We begin with the raw amino-acid sequence, 100 residues long: NADH-quinone oxidoreductase subunit K (100 aa).

3 consecutive transmembrane segments (helical) span residues 4–24 (LSNY…GVLT), 29–49 (IVVF…FVAF), and 60–80 (IFVF…LALF).

It belongs to the complex I subunit 4L family. As to quaternary structure, NDH-1 is composed of 14 different subunits. Subunits NuoA, H, J, K, L, M, N constitute the membrane sector of the complex.

The protein resides in the cell inner membrane. It catalyses the reaction a quinone + NADH + 5 H(+)(in) = a quinol + NAD(+) + 4 H(+)(out). NDH-1 shuttles electrons from NADH, via FMN and iron-sulfur (Fe-S) centers, to quinones in the respiratory chain. The immediate electron acceptor for the enzyme in this species is believed to be ubiquinone. Couples the redox reaction to proton translocation (for every two electrons transferred, four hydrogen ions are translocated across the cytoplasmic membrane), and thus conserves the redox energy in a proton gradient. This Trichlorobacter lovleyi (strain ATCC BAA-1151 / DSM 17278 / SZ) (Geobacter lovleyi) protein is NADH-quinone oxidoreductase subunit K.